A 491-amino-acid chain; its full sequence is CTD small phosphatase-like protein 1 (491 aa).

Disordered regions lie at residues 1 to 53 (MTYA…SLDY), 140 to 198 (KLTK…TARR), 221 to 249 (KIQS…TGPP), and 261 to 282 (TVTG…DGVT). Residues 17 to 26 (VPPPRTPVGP) show a composition bias toward pro residues. Residues 37–49 (SASQPLQPKNGAN) are compositionally biased toward polar residues. The span at 141-156 (LTKDEKNGGKMNRDGG) shows a compositional bias: basic and acidic residues. The span at 176–187 (ASTPLNSFSANA) shows a compositional bias: polar residues. Positions 223–237 (QSSQRTNSTNNNHQN) are enriched in low complexity. 2 stretches are compositionally biased toward polar residues: residues 238–249 (GRPSTPTNTGPP) and 264–276 (GLPT…QQNG). In terms of domain architecture, FCP1 homology spans 307-465 (QDSNKKCLVI…LDILPSLEHL (159 aa)). Asp-317 functions as the 4-aspartylphosphate intermediate in the catalytic mechanism. Positions 317, 319, and 428 each coordinate Mg(2+). Asp-319 acts as the Proton donor in catalysis.

May interact (via phosphatase domain) with cpna-1. Isoform a and isoform b may interact with lim-9 (via LIM zinc-binding domain). Isoform a and isoform b may interact (via FCP1 homology domain) with unc-89 (via fibronectin type-III domain 1, Ig-like C2-type domain 48/49 and protein kinase domain 1 or Ig-like C2-type domain 50, fibronectin type-III domain 2 and protein kinase domain 2); the interaction may act as a molecular bridge to bring two unc-89 molecules together or to stabilize a loop between the 2 protein kinase domains. The cofactor is Mg(2+). As to expression, expressed in pharyngeal, vulval and body wall muscles.

The protein localises to the cytoplasm. It localises to the myofibril. Its subcellular location is the sarcomere. The protein resides in the m line. It catalyses the reaction O-phospho-L-seryl-[protein] + H2O = L-seryl-[protein] + phosphate. It carries out the reaction O-phospho-L-threonyl-[protein] + H2O = L-threonyl-[protein] + phosphate. With respect to regulation, inhibited by beryllium trifluoride (BeF(3-)) and tetrafluoroaluminate (AlF(4-)) but not by sodium fluoride (NaF) or sodium orthovanadate (Na3VO4). Phosphatase which may play a role in the egg laying muscles. This Caenorhabditis elegans protein is CTD small phosphatase-like protein 1.